Here is a 75-residue protein sequence, read N- to C-terminus: MAYRRRKKKVKKCRLCEMKLDYVDYKDTRLLSEFLTDKGKIIPKRLTGTCAKHQRMVKVAIKRARQMGLLPYLKI.

The protein belongs to the bacterial ribosomal protein bS18 family. In terms of assembly, part of the 30S ribosomal subunit. Forms a tight heterodimer with protein bS6.

Its function is as follows. Binds as a heterodimer with protein bS6 to the central domain of the 16S rRNA, where it helps stabilize the platform of the 30S subunit. In Thermotoga sp. (strain RQ2), this protein is Small ribosomal subunit protein bS18.